The chain runs to 360 residues: GTPase Obg (360 aa).

The Obg domain occupies 1–156 (MFVDSVEIII…KCVRLELKLI (156 aa)). In terms of domain architecture, OBG-type G spans 157–360 (ADIGLVGFPN…LKFVLLEALP (204 aa)). Residues 163–170 (GFPNAGKS), 188–192 (FTTLV), 210–213 (DIPG), 279–282 (NKCD), and 341–343 (SAV) each bind GTP. Residues Ser-170 and Thr-190 each coordinate Mg(2+).

It belongs to the TRAFAC class OBG-HflX-like GTPase superfamily. OBG GTPase family. Monomer. The cofactor is Mg(2+).

Its subcellular location is the cytoplasm. Its function is as follows. An essential GTPase which binds GTP, GDP and possibly (p)ppGpp with moderate affinity, with high nucleotide exchange rates and a fairly low GTP hydrolysis rate. Plays a role in control of the cell cycle, stress response, ribosome biogenesis and in those bacteria that undergo differentiation, in morphogenesis control. In Helicobacter pylori (strain ATCC 700392 / 26695) (Campylobacter pylori), this protein is GTPase Obg.